Here is a 191-residue protein sequence, read N- to C-terminus: Guanylate kinase (191 aa).

A Guanylate kinase-like domain is found at glycine 4–arginine 182. Glycine 11–serine 18 contacts ATP.

This sequence belongs to the guanylate kinase family.

Its subcellular location is the cytoplasm. The enzyme catalyses GMP + ATP = GDP + ADP. Essential for recycling GMP and indirectly, cGMP. This is Guanylate kinase from Rubrobacter xylanophilus (strain DSM 9941 / JCM 11954 / NBRC 16129 / PRD-1).